The primary structure comprises 466 residues: Ribulose bisphosphate carboxylase large chain (466 aa).

Lys5 carries the post-translational modification N6,N6,N6-trimethyllysine. Asn114 and Thr164 together coordinate substrate. Catalysis depends on Lys166, which acts as the Proton acceptor. Substrate is bound at residue Lys168. Residues Lys192, Asp194, and Glu195 each coordinate Mg(2+). N6-carboxylysine is present on Lys192. His285 acts as the Proton acceptor in catalysis. 3 residues coordinate substrate: Arg286, His318, and Ser370.

The protein belongs to the RuBisCO large chain family. Type I subfamily. In terms of assembly, heterohexadecamer of 8 large chains and 8 small chains; disulfide-linked. The disulfide link is formed within the large subunit homodimers. Mg(2+) serves as cofactor. In terms of processing, the disulfide bond which can form in the large chain dimeric partners within the hexadecamer appears to be associated with oxidative stress and protein turnover.

The protein localises to the plastid. The protein resides in the chloroplast. It catalyses the reaction 2 (2R)-3-phosphoglycerate + 2 H(+) = D-ribulose 1,5-bisphosphate + CO2 + H2O. It carries out the reaction D-ribulose 1,5-bisphosphate + O2 = 2-phosphoglycolate + (2R)-3-phosphoglycerate + 2 H(+). RuBisCO catalyzes two reactions: the carboxylation of D-ribulose 1,5-bisphosphate, the primary event in carbon dioxide fixation, as well as the oxidative fragmentation of the pentose substrate in the photorespiration process. Both reactions occur simultaneously and in competition at the same active site. The sequence is that of Ribulose bisphosphate carboxylase large chain from Oxalis dillenii (Gray-green wood sorrel).